The chain runs to 182 residues: UPF0398 protein lwe1908 (182 aa).

The protein belongs to the UPF0398 family.

This chain is UPF0398 protein lwe1908, found in Listeria welshimeri serovar 6b (strain ATCC 35897 / DSM 20650 / CCUG 15529 / CIP 8149 / NCTC 11857 / SLCC 5334 / V8).